The sequence spans 62 residues: Phyllokinin-1 (62 aa).

An N-terminal signal peptide occupies residues 1–19 (MSFLKKSLFLVLFLGLVSS). Residues 20–48 (SICEEEKRETEEEENEDEIEEESEEKKRE) constitute a propeptide that is removed on maturation. The interval 22-62 (CEEEKRETEEEENEDEIEEESEEKKREDPERPPGFTPFRVY) is disordered. The segment covering 30–42 (EEEENEDEIEEES) has biased composition (acidic residues). Residues 43–52 (EEKKREDPER) show a composition bias toward basic and acidic residues. Position 62 is a sulfotyrosine; partial (Tyr-62).

It belongs to the frog skin active peptide (FSAP) family. Bradykinin-related peptide subfamily. In terms of processing, asp,Pro,Glu-[Thr6,Val10]-phyllokinin and [Thr6,Val10]-phyllokinin occur in sulfated and nonsulfated forms. [Thr6]-bradykinin and Des-Arg-[Thr6]-bradykinin are nonsulfated. As to expression, expressed by the skin glands.

Its subcellular location is the secreted. Functionally, inhibits ACE with a Ki of 1.6 uM, and targets B2 bradykinin receptor (BDKRB2). Provokes contraction of smooth muscle preparation (ileum). In vivo, induces an early hyperalgesic effects in living rats after intraplantar injection. In Pithecopus azureus (Orange-legged monkey tree frog), this protein is Phyllokinin-1.